We begin with the raw amino-acid sequence, 265 residues long: Synaptoporin (265 aa).

The Cytoplasmic portion of the chain corresponds to 1–4; sequence MCMV. An MARVEL domain is found at 1-202; that stretch reads MCMVIFAPLF…NIWFVFKETG (202 aa). A helical membrane pass occupies residues 5–25; that stretch reads IFAPLFAIFAFATCGGYSGGL. Residues 26 to 81 lie on the Vesicular side of the membrane; that stretch reads RLSVDCVNKTESNLSIDIAFAYPFRLHQVTFEVPTCEGKERQKLALVGDSSSSAEF. Asn33 and Asn38 each carry an N-linked (GlcNAc...) asparagine glycan. The chain crosses the membrane as a helical span at residues 82 to 102; that stretch reads FVTVAVFAFLYSLAATVVYIF. Residues 103 to 114 lie on the Cytoplasmic side of the membrane; that stretch reads FQNKYRENNRGP. The helical transmembrane segment at 115 to 135 threads the bilayer; that stretch reads LIDFIVTVVFSFLWLVGSSAW. Residues 136–177 lie on the Vesicular side of the membrane; that stretch reads AKGLSDVKVATDPKEVLLLMSACKQPSNKCMAVHSPVMSSLN. N-linked (GlcNAc...) asparagine glycosylation occurs at Asn177. A helical membrane pass occupies residues 178 to 198; that stretch reads TSVVFGFLNFILWAGNIWFVF. Topologically, residues 199–265 are cytoplasmic; that stretch reads KETGWHSSGQ…SGPTSFNNQI (67 aa). Repeat 1 spans residues 210-214; the sequence is YLSDP. The segment at 210–242 is 5 X approximate repeats; it reads YLSDPMEKHSSSYNQGGYNQDSYGSSGGYSQQA. Residues Ser212 and Ser220 each carry the phosphoserine modification. Positions 221 to 265 are disordered; sequence SYNQGGYNQDSYGSSGGYSQQASLGPTSDEFGQQPSGPTSFNNQI. 4 tandem repeats follow at residues 222 to 226, 227 to 231, 232 to 236, and 238 to 242. The span at 224–243 shows a compositional bias: low complexity; sequence QGGYNQDSYGSSGGYSQQAS. Positions 244–265 are enriched in polar residues; it reads LGPTSDEFGQQPSGPTSFNNQI.

It belongs to the synaptophysin/synaptobrevin family. In terms of tissue distribution, central nervous system.

It localises to the cytoplasmic vesicle. Its subcellular location is the secretory vesicle. It is found in the synaptic vesicle membrane. The protein localises to the synapse. The protein resides in the synaptosome. In terms of biological role, intrinsic membrane protein of small synaptic vesicles. Probable vesicular channel protein. The chain is Synaptoporin (Synpr) from Rattus norvegicus (Rat).